We begin with the raw amino-acid sequence, 62 residues long: Small ribosomal subunit protein bS21C (62 aa).

The tract at residues 43–62 (EKSKRKKLALHKQSKRRFRT) is disordered. Residues 45-62 (SKRKKLALHKQSKRRFRT) show a composition bias toward basic residues.

It belongs to the bacterial ribosomal protein bS21 family.

In Trichormus variabilis (strain ATCC 29413 / PCC 7937) (Anabaena variabilis), this protein is Small ribosomal subunit protein bS21C.